The chain runs to 981 residues: Ephrin type-A receptor 3 (981 aa).

The N-terminal stretch at Met1 to Gln20 is a signal peptide. The Extracellular portion of the chain corresponds to Ala21–Thr545. Positions Glu29–Leu210 constitute an Eph LBD domain. Fibronectin type-III domains are found at residues Pro328–Thr441 and Val442–Glu533. 4 N-linked (GlcNAc...) asparagine glycosylation sites follow: Asn340, Asn410, Asn435, and Asn485. A helical transmembrane segment spans residues Ile546–Ile566. Residues Val567–Val981 are Cytoplasmic-facing. Tyr601 and Tyr607 each carry phosphotyrosine; by autocatalysis. A Protein kinase domain is found at Ile626–Ile887. ATP is bound by residues Gly633–Gly638, Lys658, and Glu705–Ser711. Tyr706 bears the Phosphotyrosine; by autocatalysis mark. Asp751 acts as the Proton acceptor in catalysis. Arg755 to Asn756 is a binding site for ATP. Phosphotyrosine; by autocatalysis occurs at positions 784 and 927. The SAM domain occupies Ala910–His974. Residues Val979–Val981 carry the PDZ-binding motif.

The protein belongs to the protein kinase superfamily. Tyr protein kinase family. Ephrin receptor subfamily. As to quaternary structure, heterotetramer upon binding of the ligand. The heterotetramer is composed of an ephrin dimer and a receptor dimer. Oligomerization is probably required to induce biological responses. Post-translationally, autophosphorylates upon activation by efna5. As to expression, widely expressed in the developing zebrafish nervous system.

The protein localises to the cell membrane. The enzyme catalyses L-tyrosyl-[protein] + ATP = O-phospho-L-tyrosyl-[protein] + ADP + H(+). Functionally, receptor tyrosine kinase which binds promiscuously membrane-bound ephrin family ligands residing on adjacent cells, leading to contact-dependent bidirectional signaling into neighboring cells. The signaling pathway downstream of the receptor is referred to as forward signaling while the signaling pathway downstream of the ephrin ligand is referred to as reverse signaling. Highly promiscuous for ephrin-A ligands it binds preferentially efna5. Upon activation by efna5 regulates cell-cell adhesion, cytoskeletal organization and cell migration. Plays a role in cardiac cells migration and differentiation probably through activation by efna1. Involved in the retinotectal mapping of neurons. May also control the segregation but not the guidance of motor and sensory axons during neuromuscular circuit development. The polypeptide is Ephrin type-A receptor 3 (epha3) (Danio rerio (Zebrafish)).